The chain runs to 238 residues: Zinc import ATP-binding protein ZnuC (238 aa).

In terms of domain architecture, ABC transporter spans 5-220 (ITLKNIHVSF…LEFISIFGLK (216 aa)). 37-44 (GPNGAGKS) contributes to the ATP binding site.

This sequence belongs to the ABC transporter superfamily. Zinc importer (TC 3.A.1.15.5) family. In terms of assembly, the complex is composed of two ATP-binding proteins (ZnuC), two transmembrane proteins (ZnuB) and a solute-binding protein (ZnuA).

The protein resides in the cell inner membrane. The enzyme catalyses Zn(2+)(out) + ATP(in) + H2O(in) = Zn(2+)(in) + ADP(in) + phosphate(in) + H(+)(in). Functionally, part of the ABC transporter complex ZnuABC involved in zinc import. Responsible for energy coupling to the transport system. In Buchnera aphidicola subsp. Schizaphis graminum (strain Sg), this protein is Zinc import ATP-binding protein ZnuC.